The following is a 129-amino-acid chain: Small ribosomal subunit protein uS11 (129 aa).

Belongs to the universal ribosomal protein uS11 family. In terms of assembly, part of the 30S ribosomal subunit. Interacts with proteins S7 and S18. Binds to IF-3.

Located on the platform of the 30S subunit, it bridges several disparate RNA helices of the 16S rRNA. Forms part of the Shine-Dalgarno cleft in the 70S ribosome. This chain is Small ribosomal subunit protein uS11, found in Aeromonas hydrophila subsp. hydrophila (strain ATCC 7966 / DSM 30187 / BCRC 13018 / CCUG 14551 / JCM 1027 / KCTC 2358 / NCIMB 9240 / NCTC 8049).